Consider the following 495-residue polypeptide: GTPase Der (495 aa).

EngA-type G domains follow at residues 3 to 166 (PVVA…VQDE) and 208 to 381 (IKLA…SCAT). GTP-binding positions include 9 to 16 (GRPNVGKS), 56 to 60 (DTGGI), 118 to 121 (NKTD), 214 to 221 (GRPNVGKS), 261 to 265 (DTAGV), and 326 to 329 (NKWD). Residues 382-466 (RRVSTAMLTR…PIRIQFKEGE (85 aa)) form the KH-like domain.

Belongs to the TRAFAC class TrmE-Era-EngA-EngB-Septin-like GTPase superfamily. EngA (Der) GTPase family. In terms of assembly, associates with the 50S ribosomal subunit.

GTPase that plays an essential role in the late steps of ribosome biogenesis. The polypeptide is GTPase Der (Pectobacterium atrosepticum (strain SCRI 1043 / ATCC BAA-672) (Erwinia carotovora subsp. atroseptica)).